The following is a 432-amino-acid chain: Adenylosuccinate synthetase (432 aa).

GTP is bound by residues 13–19 (GDEGKGK) and 41–43 (GHT). Asp-14 acts as the Proton acceptor in catalysis. The Mg(2+) site is built by Asp-14 and Gly-41. Residues 14-17 (DEGK), 39-42 (NAGH), Thr-130, Arg-144, Gln-225, Thr-240, and Arg-304 contribute to the IMP site. The Proton donor role is filled by His-42. 300–306 (ATTGRRR) is a binding site for substrate. Residues Arg-306, 332–334 (KLD), and 415–417 (STG) contribute to the GTP site.

Belongs to the adenylosuccinate synthetase family. Homodimer. Mg(2+) is required as a cofactor.

Its subcellular location is the cytoplasm. It carries out the reaction IMP + L-aspartate + GTP = N(6)-(1,2-dicarboxyethyl)-AMP + GDP + phosphate + 2 H(+). The protein operates within purine metabolism; AMP biosynthesis via de novo pathway; AMP from IMP: step 1/2. Functionally, plays an important role in the de novo pathway of purine nucleotide biosynthesis. Catalyzes the first committed step in the biosynthesis of AMP from IMP. The chain is Adenylosuccinate synthetase from Klebsiella pneumoniae subsp. pneumoniae (strain ATCC 700721 / MGH 78578).